Consider the following 37-residue polypeptide: Hemextin A (37 aa).

As to quaternary structure, heterotetramer composed of two A and two B chains; non-covalently linked. Does not exist as a complex in the crude venom. In terms of processing, may contain several disulfide bonds. Expressed by the venom gland.

It is found in the secreted. Functionally, hemextin A (monomer): exhibits mild anticoagulant activity. It specifically inhibits the activation of FX (F10) by the TF-FVIIa complex (extrinsic tenase complex (ETC)) by non-competitively inhibiting the enzymatic activity of FVIIa. In terms of biological role, hemextin AB complex: specifically inhibits the activation of FX (F10) by the TF-FVIIa complex (extrinsic tenase complex (ETC)) (IC(50)= 100 nM, Ki=25 nM) by non-competitively inhibiting the enzymatic activity of FVIIa. In Hemachatus haemachatus (Rinkhals), this protein is Hemextin A.